Here is a 447-residue protein sequence, read N- to C-terminus: Protein king tubby (447 aa).

Low complexity-rich tracts occupy residues 71 to 92 (GTGP…YSDS) and 157 to 169 (NNNN…NSSS). The tract at residues 71-196 (GTGPNVTATS…GGAPDTEGDV (126 aa)) is disordered.

It belongs to the TUB family.

The protein resides in the cytoplasm. Its subcellular location is the nucleus. The sequence is that of Protein king tubby from Anopheles gambiae (African malaria mosquito).